The primary structure comprises 874 residues: Alanine--tRNA ligase (874 aa).

Zn(2+) is bound by residues H562, H566, C663, and H667.

This sequence belongs to the class-II aminoacyl-tRNA synthetase family. It depends on Zn(2+) as a cofactor.

The protein localises to the cytoplasm. It carries out the reaction tRNA(Ala) + L-alanine + ATP = L-alanyl-tRNA(Ala) + AMP + diphosphate. In terms of biological role, catalyzes the attachment of alanine to tRNA(Ala) in a two-step reaction: alanine is first activated by ATP to form Ala-AMP and then transferred to the acceptor end of tRNA(Ala). Also edits incorrectly charged Ser-tRNA(Ala) and Gly-tRNA(Ala) via its editing domain. The sequence is that of Alanine--tRNA ligase from Bordetella bronchiseptica (strain ATCC BAA-588 / NCTC 13252 / RB50) (Alcaligenes bronchisepticus).